The following is a 96-amino-acid chain: Large ribosomal subunit protein bL25 (96 aa).

This sequence belongs to the bacterial ribosomal protein bL25 family. In terms of assembly, part of the 50S ribosomal subunit; part of the 5S rRNA/L5/L18/L25 subcomplex. Contacts the 5S rRNA. Binds to the 5S rRNA independently of L5 and L18.

Its function is as follows. This is one of the proteins that binds to the 5S RNA in the ribosome where it forms part of the central protuberance. The polypeptide is Large ribosomal subunit protein bL25 (Francisella philomiragia subsp. philomiragia (strain ATCC 25017 / CCUG 19701 / FSC 153 / O#319-036)).